The sequence spans 1337 residues: ATP-dependent helicase/nuclease subunit A (1337 aa).

The UvrD-like helicase ATP-binding domain maps to 3–484 (FTPSKEQEPA…LDLSDNYRSR (482 aa)). Residue 24-31 (ASAGSGKT) participates in ATP binding. The 346-residue stretch at 522 to 867 (ADRDQASPAT…NVMTIHKSKG (346 aa)) folds into the UvrD-like helicase C-terminal domain.

Belongs to the helicase family. AddA subfamily. In terms of assembly, heterodimer of AddA and AddB/RexB. The cofactor is Mg(2+).

It carries out the reaction Couples ATP hydrolysis with the unwinding of duplex DNA by translocating in the 3'-5' direction.. It catalyses the reaction ATP + H2O = ADP + phosphate + H(+). Functionally, the heterodimer acts as both an ATP-dependent DNA helicase and an ATP-dependent, dual-direction single-stranded exonuclease. Recognizes the chi site generating a DNA molecule suitable for the initiation of homologous recombination. The AddA nuclease domain is required for chi fragment generation; this subunit has the helicase and 3' -&gt; 5' nuclease activities. This is ATP-dependent helicase/nuclease subunit A from Limosilactobacillus fermentum (strain NBRC 3956 / LMG 18251) (Lactobacillus fermentum).